A 261-amino-acid polypeptide reads, in one-letter code: Small ribosomal subunit protein uS2 (261 aa).

S2 carries the post-translational modification N-acetylserine. Residues 214 to 261 (ATEDIKTDDVEEAPAADAETEWTGETEEVDWAESGATPAAEEAAASNW) are disordered. The span at 222–244 (DVEEAPAADAETEWTGETEEVDW) shows a compositional bias: acidic residues. Residues 245 to 261 (AESGATPAAEEAAASNW) are compositionally biased toward low complexity.

The protein belongs to the universal ribosomal protein uS2 family. In terms of assembly, component of the small ribosomal subunit. Mature ribosomes consist of a small (40S) and a large (60S) subunit. The 40S subunit contains about 33 different proteins and 1 molecule of RNA (18S). The 60S subunit contains about 49 different proteins and 3 molecules of RNA (25S, 5.8S and 5S). Interacts with RPS21.

The protein localises to the cytoplasm. In terms of biological role, required for the assembly and/or stability of the 40S ribosomal subunit. Required for the processing of the 20S rRNA-precursor to mature 18S rRNA in a late step of the maturation of 40S ribosomal subunits. The protein is Small ribosomal subunit protein uS2 of Debaryomyces hansenii (strain ATCC 36239 / CBS 767 / BCRC 21394 / JCM 1990 / NBRC 0083 / IGC 2968) (Yeast).